The sequence spans 1108 residues: Transmembrane protein 132C (1108 aa).

Positions 1 to 27 (MRSEGAAPGPAAPLCGALSLLLGALLG) are cleaved as a signal peptide. Residues 28-922 (KVIEGHGVTD…LVQTPRGLSD (895 aa)) lie on the Extracellular side of the membrane. N-linked (GlcNAc...) asparagine glycans are attached at residues asparagine 316 and asparagine 373. The segment covering 820-836 (HASDRRQKGQHHERTGQ) has biased composition (basic and acidic residues). Positions 820 to 857 (HASDRRQKGQHHERTGQDGHLYGSSPVEREEGALRRAT) are disordered. The helical transmembrane segment at 923 to 943 (LEIGMYALLGVFCLAILVFLI) threads the bilayer. Residues 944 to 1108 (NCATFALKYR…NYLEKLKDKA (165 aa)) are Cytoplasmic-facing. The segment at 1022–1072 (QSQIHRSADSGGRQGREQKQDPLHSPTSKRKKVKFTTFTTIPPDDSCPTVN) is disordered.

The protein belongs to the TMEM132 family.

Its subcellular location is the membrane. In Homo sapiens (Human), this protein is Transmembrane protein 132C (TMEM132C).